A 251-amino-acid chain; its full sequence is Capsid protein (251 aa).

The Bipartite nuclear localization signal signature appears at 3–20; the sequence is KRDAPWRLMAGTSKVSRS. Residues 35–49 carry the Nuclear localization signal motif; the sequence is KAAAWVNRPMYRKPR. The segment at 63-80 is a zinc-finger region; that stretch reads CEGPCKVQSYEQRHDISH. The short motif at 96–117 is the Nuclear export signal element; sequence ITHRVGKRFCVKSVYILGKIWM. Positions 195 to 242 match the Bipartite nuclear localization signal motif; that stretch reads RRFWKVNNHVVYNHQEAGKYENHTENALLLYMACTHASNPVYATLKIR.

Belongs to the geminiviridae capsid protein family. As to quaternary structure, homomultimer. Binds to single-stranded and double-stranded viral DNA. Interacts (via nuclear localization signals) with host importin alpha-1a.

It localises to the virion. The protein localises to the host nucleus. Its function is as follows. Encapsidates the viral DNA into characteristic twinned ('geminate') particles. Binds the genomic viral ssDNA and shuttles it into and out of the cell nucleus. The CP of bipartite geminiviruses is not required for cell-to-cell or systemic movement. This is Capsid protein from Squash leaf curl virus (SLCV).